The following is a 302-amino-acid chain: Probable alpha-L-glutamate ligase (302 aa).

The 184-residue stretch at 104–287 (MQLLSREGVG…VAGMIIEFIE (184 aa)) folds into the ATP-grasp domain. ATP is bound by residues K141, 178–179 (EF), D187, and 211–213 (RSN). Mg(2+) is bound by residues D248, E260, and N262. The Mn(2+) site is built by D248, E260, and N262.

This sequence belongs to the RimK family. It depends on Mg(2+) as a cofactor. Requires Mn(2+) as cofactor.

The protein is Probable alpha-L-glutamate ligase of Halorhodospira halophila (strain DSM 244 / SL1) (Ectothiorhodospira halophila (strain DSM 244 / SL1)).